The primary structure comprises 291 residues: NAD kinase (291 aa).

Aspartate 72 functions as the Proton acceptor in the catalytic mechanism. NAD(+) is bound by residues 72-73, 146-147, arginine 157, arginine 174, aspartate 176, 187-192, and glutamine 247; these read DG, ND, and TAYSLS.

This sequence belongs to the NAD kinase family. The cofactor is a divalent metal cation.

Its subcellular location is the cytoplasm. It catalyses the reaction NAD(+) + ATP = ADP + NADP(+) + H(+). Functionally, involved in the regulation of the intracellular balance of NAD and NADP, and is a key enzyme in the biosynthesis of NADP. Catalyzes specifically the phosphorylation on 2'-hydroxyl of the adenosine moiety of NAD to yield NADP. The polypeptide is NAD kinase (Hydrogenovibrio crunogenus (strain DSM 25203 / XCL-2) (Thiomicrospira crunogena)).